The primary structure comprises 529 residues: Heat shock factor protein 1 (529 aa).

Methionine 1 is subject to N-acetylmethionine. The tract at residues 15–120 is DNA-binding domain; the sequence is VPAFLTKLWT…LLENIKRKVT (106 aa). Lysine 80 carries the N6-acetyllysine modification. An N6-acetyllysine; alternate modification is found at lysine 91. Residue lysine 91 forms a Glycyl lysine isopeptide (Lys-Gly) (interchain with G-Cter in SUMO2); alternate linkage. At lysine 118 the chain carries N6-acetyllysine. At serine 121 the chain carries Phosphoserine; by MAPKAPK2. Glycyl lysine isopeptide (Lys-Gly) (interchain with G-Cter in SUMO2) cross-links involve residues lysine 126 and lysine 131. The segment at 130-203 is hydrophobic repeat HR-A/B; the sequence is IKIRQDSVTK…ISLVQSNRIL (74 aa). Threonine 142 carries the phosphothreonine; by CK2 modification. 2 positions are modified to N6-acetyllysine: lysine 150 and lysine 188. The interval 203-224 is d domain; sequence LGVKRKIPLMLNDSGSAHSMPK. Lysine 208 bears the N6-acetyllysine; alternate mark. Residue lysine 208 forms a Glycyl lysine isopeptide (Lys-Gly) (interchain with G-Cter in SUMO2); alternate linkage. Serine 216 carries the post-translational modification Phosphoserine; by PLK1. The interval 221–310 is regulatory domain; it reads SMPKYSRQFS…PPSPPQSPRV (90 aa). Lysine 224 participates in a covalent cross-link: Glycyl lysine isopeptide (Lys-Gly) (interchain with G-Cter in SUMO2). At serine 230 the chain carries Phosphoserine; by CAMK2A. Residues serine 275 and serine 292 each carry the phosphoserine modification. Residues 295–324 are disordered; that stretch reads VRVKEEPPSPPQSPRVEEASPGRPSSVDTL. Lysine 298 carries the post-translational modification N6-acetyllysine; alternate. A Glycyl lysine isopeptide (Lys-Gly) (interchain with G-Cter in SUMO2); alternate cross-link involves residue lysine 298. Lysine 298 participates in a covalent cross-link: Glycyl lysine isopeptide (Lys-Gly) (interchain with G-Cter in SUMO); alternate. Serine 303 is subject to Phosphoserine; by GSK3-beta. Serine 307 is modified (phosphoserine; by MAPK3). Serine 314 and serine 319 each carry phosphoserine. A Phosphoserine; by PKA modification is found at serine 320. Threonine 323 is modified (phosphothreonine). Serine 326 is subject to Phosphoserine; by MAPK12. Positions 336-372 are disordered; the sequence is RESEPAPASVTALTDARGHTDTEGRPPSPPPTSTPEK. Serine 344 is modified (phosphoserine). Phosphoserine; by MAPK8 is present on serine 363. Residues 371–529 form a transactivation domain region; sequence EKCLSVACLD…PPKAKDPTVS (159 aa). The interval 384 to 409 is hydrophobic repeat HR-C; it reads LSDHLDAMDSNLDNLQTMLSSHGFSV. The short motif at 412-420 is the 9aaTAD element; that stretch reads SALLDLFSP. The residue at position 419 (serine 419) is a Phosphoserine; by PLK1. Phosphoserine is present on serine 444. Disordered stretches follow at residues 444 to 463 and 502 to 529; these read SPQE…DSGK and EGDG…PTVS. Lysine 524 bears the N6-acetyllysine mark.

The protein belongs to the HSF family. As to quaternary structure, monomer; cytoplasmic latent and transcriptionally inactive monomeric form in unstressed cells. Homotrimer; in response to stress, such as heat shock, homotrimerizes and translocates into the nucleus, binds to heat shock element (HSE) sequences in promoter of heat shock protein (HSP) genes and acquires transcriptional ability. Interacts (via monomeric form) with FKBP4; this interaction occurs in unstressed cells. Associates (via monomeric form) with HSP90 proteins in a multichaperone complex in unnstressed cell; this association maintains HSF1 in a non-DNA-binding and transcriptional inactive form by preventing HSF1 homotrimerization. Homotrimeric transactivation activity is modulated by protein-protein interactions and post-translational modifications. Interacts with HSP90AA1; this interaction is decreased in a IER5-dependent manner, promoting HSF1 accumulation in the nucleus, homotrimerization and DNA-binding activities. Part (via regulatory domain in the homotrimeric form) of a large heat shock-induced HSP90-dependent multichaperone complex at least composed of FKBP4, FKBP5, HSP90 proteins, PPID, PPP5C and PTGES3; this association maintains the HSF1 homotrimeric DNA-bound form in a transcriptionally inactive form. Interacts with BAG3 (via BAG domain); this interaction occurs in normal and heat-shocked cells promoting nuclear shuttling of HSF1 in a BAG3-dependent manner. Interacts (via homotrimeric and hyperphosphorylated form) with FKBP4; this interaction occurs upon heat shock in a HSP90-dependent multichaperone complex. Interacts (via homotrimeric form preferentially) with EEF1A proteins. In heat shocked cells, stress-denatured proteins compete with HSF1 homotrimeric DNA-bound form for association of the HSP90-dependent multichaperone complex, and hence alleviating repression of HSF1-mediated transcriptional activity. Interacts (via homotrimeric form preferentially) with DAXX; this interaction relieves homotrimeric HSF1 from repression of its transcriptional activity by HSP90-dependent multichaperone complex upon heat shock. Interacts (via D domain and preferentially with hyperphosphorylated form) with JNK1; this interaction occurs under both normal growth conditions and immediately upon heat shock. Interacts (via D domain and preferentially with hyperphosphorylated form) with MAPK3; this interaction occurs upon heat shock. Interacts with IER5 (via central region); this interaction promotes PPP2CA-induced dephosphorylation on Ser-121, Ser-307, Ser-314, Thr-323 and Thr-367 and HSF1 transactivation activity. Found in a ribonucleoprotein complex composed of the HSF1 homotrimeric form, translation elongation factor eEF1A proteins and non-coding RNA heat shock RNA-1 (HSR1); this complex occurs upon heat shock and stimulates HSF1 DNA-binding activity. Interacts (via transactivation domain) with HSPA1A/HSP70 and DNAJB1; these interactions result in the inhibition of heat shock- and HSF1-induced transcriptional activity during the attenuation and recovery phase from heat shock. Interacts (via Ser-303 and Ser-307 phosphorylated form) with YWHAE; this interaction promotes HSF1 sequestration in the cytoplasm in an ERK-dependent manner. Found in a complex with IER5 and PPP2CA. Interacts with TPR; this interaction increases upon heat shock and stimulates export of HSP70 mRNA. Interacts with SYMPK (via N-terminus) and CSTF2; these interactions occur upon heat shock. Interacts (via transactivation domain) with HSPA8. Interacts with EEF1D; this interaction occurs at heat shock promoter element (HSE) sequences. Interacts with MAPKAPK2. Interacts with PRKACA/PKA. Interacts (via transactivation domain) with GTF2A2. Interacts (via transactivation domain) with GTF2B. Interacts (via transactivation domain) with TBP. Interacts with CDK9, CCNT1 and EP300. Interacts (via N-terminus) with XRCC5 (via N-terminus) and XRCC6 (via N-terminus); these interactions are direct and prevent XRCC5/XRCC6 heterodimeric binding and non-homologous end joining (NHEJ) repair activities induced by ionizing radiation (IR). Interacts with PLK1; this interaction occurs during the early mitotic period, increases upon heat shock but does not modulate neither HSF1 homotrimerization and DNA-binding activities. Interacts (via Ser-216 phosphorylated form) with CDC20; this interaction occurs in mitosis in a MAD2L1-dependent manner and prevents PLK1-stimulated degradation of HSF1 by blocking the recruitment of the SCF(BTRC) ubiquitin ligase complex. Interacts with MAD2L1; this interaction occurs in mitosis. Interacts with BTRC; this interaction occurs during mitosis, induces its ubiquitin-dependent degradation following stimulus-dependent phosphorylation at Ser-216, a process inhibited by CDC20. Interacts with HSP90AA1 and HSP90AB1. Forms a complex with TTC5/STRAP and p300/EP300; these interactions augment chromatin-bound HSF1 and p300/EP300 histone acetyltransferase activity. Phosphorylated. Phosphorylated in unstressed cells; this phosphorylation is constitutive and implicated in the repression of HSF1 transcriptional activity. Phosphorylated on Ser-121 by MAPKAPK2; this phosphorylation promotes interaction with HSP90 proteins and inhibits HSF1 homotrimerization, DNA-binding and transactivation activities. Phosphorylation on Ser-303 by GSK3B/GSK3-beta and on Ser-307 by MAPK3 within the regulatory domain is involved in the repression of HSF1 transcriptional activity and occurs in a RAF1-dependent manner. Phosphorylation on Ser-303 and Ser-307 increases HSF1 nuclear export in a YWHAE- and XPO1/CRM1-dependent manner. Phosphorylation on Ser-307 is a prerequisite for phosphorylation on Ser-303. According to PubMed:9535852, Ser-303 is not phosphorylated in unstressed cells. Phosphorylated on Ser-419 by PLK1; phosphorylation promotes nuclear translocation upon heat shock. Hyperphosphorylated upon heat shock and during the attenuation and recovery phase period of the heat shock response. Phosphorylated on Thr-142; this phosphorylation increases HSF1 transactivation activity upon heat shock. Phosphorylation on Ser-230 by CAMK2A; this phosphorylation enhances HSF1 transactivation activity upon heat shock. Phosphorylation on Ser-326 by MAPK12; this phosphorylation enhances HSF1 nuclear translocation, homotrimerization and transactivation activities upon heat shock. Phosphorylated on Ser-320 by PRKACA/PKA; this phosphorylation promotes nuclear localization and transcriptional activity upon heat shock. Phosphorylated on Ser-363 by MAPK8; this phosphorylation occurs upon heat shock, induces HSF1 translocation into nuclear stress bodies and negatively regulates transactivation activity. Neither basal nor stress-inducible phosphorylation on Ser-230, Ser-292, Ser-303, Ser-307, Ser-314, Ser-319, Ser-320, Thr-323, Ser-326, Ser-338, Ser-344, Ser-363, Thr-367, Ser-368 and Thr-369 within the regulatory domain is involved in the regulation of HSF1 subcellular localization or DNA-binding activity; however, it negatively regulates HSF1 transactivation activity. Phosphorylated on Ser-216 by PLK1 in the early mitotic period; this phosphorylation regulates HSF1 localization to the spindle pole, the recruitment of the SCF(BTRC) ubiquitin ligase complex inducing HSF1 degradation, and hence mitotic progression. Dephosphorylated on Ser-121, Ser-307, Ser-314, Thr-323 and Thr-367 by phosphatase PPP2CA in an IER5-dependent manner, leading to HSF1-mediated transactivation activity. In terms of processing, sumoylated with SUMO1 and SUMO2 upon heat shock in a ERK2-dependent manner. Sumoylated by SUMO1 on Lys-298; sumoylation occurs upon heat shock and promotes its localization to nuclear stress bodies and DNA-binding activity. Phosphorylation on Ser-303 and Ser-307 is probably a prerequisite for sumoylation. Post-translationally, acetylated on Lys-118; this acetylation is decreased in a IER5-dependent manner. Acetylated on Lys-118, Lys-208 and Lys-298; these acetylations occur in a EP300-dependent manner. Acetylated on Lys-80; this acetylation inhibits DNA-binding activity upon heat shock. Deacetylated on Lys-80 by SIRT1; this deacetylation increases DNA-binding activity. Ubiquitinated by SCF(BTRC) and degraded following stimulus-dependent phosphorylation at Ser-216 by PLK1 in mitosis. Polyubiquitinated. Undergoes proteasomal degradation upon heat shock and during the attenuation and recovery phase period of the heat shock response.

The protein resides in the nucleus. Its subcellular location is the cytoplasm. It localises to the nucleoplasm. It is found in the perinuclear region. The protein localises to the cytoskeleton. The protein resides in the spindle pole. Its subcellular location is the microtubule organizing center. It localises to the centrosome. It is found in the chromosome. The protein localises to the centromere. The protein resides in the kinetochore. Its function is as follows. Functions as a stress-inducible and DNA-binding transcription factor that plays a central role in the transcriptional activation of the heat shock response (HSR), leading to the expression of a large class of molecular chaperones, heat shock proteins (HSPs), that protect cells from cellular insult damage. In unstressed cells, is present in a HSP90-containing multichaperone complex that maintains it in a non-DNA-binding inactivated monomeric form. Upon exposure to heat and other stress stimuli, undergoes homotrimerization and activates HSP gene transcription through binding to site-specific heat shock elements (HSEs) present in the promoter regions of HSP genes. Upon heat shock stress, forms a chromatin-associated complex with TTC5/STRAP and p300/EP300 to stimulate HSR transcription, therefore increasing cell survival. Activation is reversible, and during the attenuation and recovery phase period of the HSR, returns to its unactivated form. Binds to inverted 5'-NGAAN-3' pentamer DNA sequences. Binds to chromatin at heat shock gene promoters. Activates transcription of transcription factor FOXR1 which in turn activates transcription of the heat shock chaperones HSPA1A and HSPA6 and the antioxidant NADPH-dependent reductase DHRS2. Also serves several other functions independently of its transcriptional activity. Involved in the repression of Ras-induced transcriptional activation of the c-fos gene in heat-stressed cells. Positively regulates pre-mRNA 3'-end processing and polyadenylation of HSP70 mRNA upon heat-stressed cells in a symplekin (SYMPK)-dependent manner. Plays a role in nuclear export of stress-induced HSP70 mRNA. Plays a role in the regulation of mitotic progression. Also plays a role as a negative regulator of non-homologous end joining (NHEJ) repair activity in a DNA damage-dependent manner. Involved in stress-induced cancer cell proliferation in a IER5-dependent manner. (Microbial infection) Plays a role in latent human immunodeficiency virus (HIV-1) transcriptional reactivation. Binds to the HIV-1 long terminal repeat promoter (LTR) to reactivate viral transcription by recruiting cellular transcriptional elongation factors, such as CDK9, CCNT1 and EP300. In Homo sapiens (Human), this protein is Heat shock factor protein 1.